Reading from the N-terminus, the 697-residue chain is Elongation factor G (697 aa).

The tr-type G domain occupies 8 to 283; it reads ERCRNIGIMA…AVVDYLPSPL (276 aa). GTP-binding positions include 17–24, 81–85, and 135–138; these read AHIDAGKT, DTPGH, and NKID.

This sequence belongs to the TRAFAC class translation factor GTPase superfamily. Classic translation factor GTPase family. EF-G/EF-2 subfamily.

It is found in the cytoplasm. Its function is as follows. Catalyzes the GTP-dependent ribosomal translocation step during translation elongation. During this step, the ribosome changes from the pre-translocational (PRE) to the post-translocational (POST) state as the newly formed A-site-bound peptidyl-tRNA and P-site-bound deacylated tRNA move to the P and E sites, respectively. Catalyzes the coordinated movement of the two tRNA molecules, the mRNA and conformational changes in the ribosome. This chain is Elongation factor G, found in Koribacter versatilis (strain Ellin345).